A 322-amino-acid chain; its full sequence is Secreted effector protein SseI (322 aa).

As to quaternary structure, interacts with host IQGAP1 and host TRIP6 (thyroid receptor-interacting protein 6).

Its subcellular location is the secreted. The protein resides in the host cytoplasm. Effector proteins function to alter host cell physiology and promote bacterial survival in host tissues. This protein is required to maintain a long-term chronic systemic infection in mice. It inhibits normal cell migration of primary macrophages and dendritic cells, by a mechanism that involves interaction with the host factor IQGAP1, an important regulator of the cytoskeleton and cell migration. Also accelerates the systemic spread of infection from the gastrointestinal tract to the bloodstream, probably by interacting with host TRIP6. This chain is Secreted effector protein SseI (sseI), found in Salmonella typhimurium (strain LT2 / SGSC1412 / ATCC 700720).